The sequence spans 353 residues: UPF0283 membrane protein YcjF (353 aa).

The disordered stretch occupies residues 16–35; the sequence is KEESTSAFKAQQTFSEAESR. Residues 20–31 show a composition bias toward polar residues; that stretch reads TSAFKAQQTFSE. The next 3 helical transmembrane spans lie at 70 to 90, 100 to 120, and 213 to 233; these read MVMG…VQWT, VALG…GSVV, and ESTL…FIAW.

It belongs to the UPF0283 family.

Its subcellular location is the cell inner membrane. The sequence is that of UPF0283 membrane protein YcjF from Salmonella heidelberg (strain SL476).